The chain runs to 471 residues: E3 ubiquitin-protein ligase TRIM38 (471 aa).

Residues 16 to 62 form an RING-type zinc finger; that stretch reads CSICKAMMSHPVSINCGHSYCKSCIQSYYCNVSPKTGWKMLGCPLCS. The B box-type zinc finger occupies 90 to 131; sequence DQDMVCEEHEEKFNRFCEDDGQLLCWRCYWEDRHKGHTLAHV. Positions 95, 98, 117, and 123 each coordinate Zn(2+). The B30.2/SPRY domain maps to 276 to 471; the sequence is CNVSELYFDV…PLFLPAINNQ (196 aa).

Interacts (via B30.2/SPRY domain) with TAB2 and TAB3.

Its subcellular location is the cytoplasm. The enzyme catalyses S-ubiquitinyl-[E2 ubiquitin-conjugating enzyme]-L-cysteine + [acceptor protein]-L-lysine = [E2 ubiquitin-conjugating enzyme]-L-cysteine + N(6)-ubiquitinyl-[acceptor protein]-L-lysine.. The protein operates within protein modification; protein ubiquitination. Its pathway is protein modification; protein sumoylation. In terms of biological role, E3 ubiquitin-protein and E3 SUMO-protein ligase that acts as a regulator of innate immunity. Acts as a negative regulator of type I interferon IFN-beta production by catalyzing 'Lys-48'-linked polyubiquitination of AZI2/NAP1, leading to its degradation. Mediates 'Lys-48'-linked polyubiquitination and proteasomal degradation of the critical TLR adapter TICAM1, inhibiting TLR3-mediated type I interferon signaling. Acts as a positive regulator of the cGAS-STING pathway by acting as a E3 SUMO-protein ligase: mediates sumoylation of CGAS and STING, preventing their degradation and thereby activating the innate immune response to DNA virus. Also acts as a negative regulator of NF-kappa-B signaling independently of its E3 protein ligase activity by promoting lysosome-dependent degradation of TAB2 and TAB3 adapters. This is E3 ubiquitin-protein ligase TRIM38 from Mus musculus (Mouse).